Reading from the N-terminus, the 259-residue chain is Probable metal transport system ATP-binding protein CPn_0348/CP_0412/CPj0348/CpB0355 (259 aa).

Residues 3–241 enclose the ABC transporter domain; it reads VKDETFWSVH…TIFQTYGCEI (239 aa). 41 to 48 provides a ligand contact to ATP; sequence GPNGAGKS.

This sequence belongs to the ABC transporter superfamily.

Its subcellular location is the cell inner membrane. In terms of biological role, part of an ATP-driven transport system CPn0346/CPn0347/CPn0348/CPn0349 for a metal. Probably responsible for energy coupling to the transport system. The polypeptide is Probable metal transport system ATP-binding protein CPn_0348/CP_0412/CPj0348/CpB0355 (Chlamydia pneumoniae (Chlamydophila pneumoniae)).